A 165-amino-acid polypeptide reads, in one-letter code: Small ribosomal subunit protein uS5 (165 aa).

The S5 DRBM domain occupies 13–76 (LEEKVLVVNR…DAARKNLVSI (64 aa)).

Belongs to the universal ribosomal protein uS5 family. Part of the 30S ribosomal subunit. Contacts proteins S4 and S8.

Its function is as follows. With S4 and S12 plays an important role in translational accuracy. In terms of biological role, located at the back of the 30S subunit body where it stabilizes the conformation of the head with respect to the body. The sequence is that of Small ribosomal subunit protein uS5 from Chlamydia muridarum (strain MoPn / Nigg).